Here is a 498-residue protein sequence, read N- to C-terminus: ATP synthase subunit beta, chloroplastic (498 aa).

172–179 contacts ATP; sequence GGAGVGKT.

It belongs to the ATPase alpha/beta chains family. In terms of assembly, F-type ATPases have 2 components, CF(1) - the catalytic core - and CF(0) - the membrane proton channel. CF(1) has five subunits: alpha(3), beta(3), gamma(1), delta(1), epsilon(1). CF(0) has four main subunits: a(1), b(1), b'(1) and c(9-12).

It localises to the plastid. The protein resides in the chloroplast thylakoid membrane. The catalysed reaction is ATP + H2O + 4 H(+)(in) = ADP + phosphate + 5 H(+)(out). Functionally, produces ATP from ADP in the presence of a proton gradient across the membrane. The catalytic sites are hosted primarily by the beta subunits. The chain is ATP synthase subunit beta, chloroplastic from Panax ginseng (Korean ginseng).